The chain runs to 158 residues: Endoribonuclease YbeY (158 aa).

Zn(2+)-binding residues include H121, H125, and H131.

The protein belongs to the endoribonuclease YbeY family. Zn(2+) is required as a cofactor.

It localises to the cytoplasm. Single strand-specific metallo-endoribonuclease involved in late-stage 70S ribosome quality control and in maturation of the 3' terminus of the 16S rRNA. The chain is Endoribonuclease YbeY from Exiguobacterium sibiricum (strain DSM 17290 / CCUG 55495 / CIP 109462 / JCM 13490 / 255-15).